Consider the following 173-residue polypeptide: FMN reductase (NADH) RutF 2 (173 aa).

This sequence belongs to the non-flavoprotein flavin reductase family. RutF subfamily.

It catalyses the reaction FMNH2 + NAD(+) = FMN + NADH + 2 H(+). Catalyzes the reduction of FMN to FMNH2 which is used to reduce pyrimidine by RutA via the Rut pathway. This Rhizobium rhizogenes (strain K84 / ATCC BAA-868) (Agrobacterium radiobacter) protein is FMN reductase (NADH) RutF 2.